A 287-amino-acid polypeptide reads, in one-letter code: Lipoyl synthase (287 aa).

Residues C34, C39, C45, C60, C64, C67, and S273 each coordinate [4Fe-4S] cluster. Residues 46 to 262 enclose the Radical SAM core domain; it reads WNKRHATVMI…KYIAYSKGFL (217 aa).

It belongs to the radical SAM superfamily. Lipoyl synthase family. The cofactor is [4Fe-4S] cluster.

The protein localises to the cytoplasm. The catalysed reaction is [[Fe-S] cluster scaffold protein carrying a second [4Fe-4S](2+) cluster] + N(6)-octanoyl-L-lysyl-[protein] + 2 oxidized [2Fe-2S]-[ferredoxin] + 2 S-adenosyl-L-methionine + 4 H(+) = [[Fe-S] cluster scaffold protein] + N(6)-[(R)-dihydrolipoyl]-L-lysyl-[protein] + 4 Fe(3+) + 2 hydrogen sulfide + 2 5'-deoxyadenosine + 2 L-methionine + 2 reduced [2Fe-2S]-[ferredoxin]. It functions in the pathway protein modification; protein lipoylation via endogenous pathway; protein N(6)-(lipoyl)lysine from octanoyl-[acyl-carrier-protein]: step 2/2. Functionally, catalyzes the radical-mediated insertion of two sulfur atoms into the C-6 and C-8 positions of the octanoyl moiety bound to the lipoyl domains of lipoate-dependent enzymes, thereby converting the octanoylated domains into lipoylated derivatives. The polypeptide is Lipoyl synthase (Wolbachia sp. subsp. Drosophila simulans (strain wRi)).